Reading from the N-terminus, the 86-residue chain is ATP synthase subunit c (86 aa).

2 helical membrane-spanning segments follow: residues Val8–Ile28 and Gly66–Leu86.

The protein belongs to the ATPase C chain family. F-type ATPases have 2 components, F(1) - the catalytic core - and F(0) - the membrane proton channel. F(1) has five subunits: alpha(3), beta(3), gamma(1), delta(1), epsilon(1). F(0) has three main subunits: a(1), b(2) and c(10-14). The alpha and beta chains form an alternating ring which encloses part of the gamma chain. F(1) is attached to F(0) by a central stalk formed by the gamma and epsilon chains, while a peripheral stalk is formed by the delta and b chains.

The protein localises to the cell membrane. F(1)F(0) ATP synthase produces ATP from ADP in the presence of a proton or sodium gradient. F-type ATPases consist of two structural domains, F(1) containing the extramembraneous catalytic core and F(0) containing the membrane proton channel, linked together by a central stalk and a peripheral stalk. During catalysis, ATP synthesis in the catalytic domain of F(1) is coupled via a rotary mechanism of the central stalk subunits to proton translocation. Its function is as follows. Key component of the F(0) channel; it plays a direct role in translocation across the membrane. A homomeric c-ring of between 10-14 subunits forms the central stalk rotor element with the F(1) delta and epsilon subunits. The protein is ATP synthase subunit c of Natranaerobius thermophilus (strain ATCC BAA-1301 / DSM 18059 / JW/NM-WN-LF).